We begin with the raw amino-acid sequence, 615 residues long: 1-deoxy-D-xylulose-5-phosphate synthase (615 aa).

Residues His76 and 117–119 (GHS) contribute to the thiamine diphosphate site. Asp148 serves as a coordination point for Mg(2+). Residues 149–150 (GA), Asn177, Tyr284, and Glu365 contribute to the thiamine diphosphate site. Asn177 provides a ligand contact to Mg(2+).

It belongs to the transketolase family. DXPS subfamily. As to quaternary structure, homodimer. The cofactor is Mg(2+). Thiamine diphosphate serves as cofactor.

It carries out the reaction D-glyceraldehyde 3-phosphate + pyruvate + H(+) = 1-deoxy-D-xylulose 5-phosphate + CO2. The protein operates within metabolic intermediate biosynthesis; 1-deoxy-D-xylulose 5-phosphate biosynthesis; 1-deoxy-D-xylulose 5-phosphate from D-glyceraldehyde 3-phosphate and pyruvate: step 1/1. Catalyzes the acyloin condensation reaction between C atoms 2 and 3 of pyruvate and glyceraldehyde 3-phosphate to yield 1-deoxy-D-xylulose-5-phosphate (DXP). This Francisella tularensis subsp. tularensis (strain FSC 198) protein is 1-deoxy-D-xylulose-5-phosphate synthase.